We begin with the raw amino-acid sequence, 414 residues long: Serine--tRNA ligase (414 aa).

L-serine is bound at residue 230–232; it reads TAE. Residue 261-263 participates in ATP binding; it reads RKE. Residue glutamate 284 participates in L-serine binding. 348-351 lines the ATP pocket; the sequence is EISS. Serine 382 lines the L-serine pocket.

Belongs to the class-II aminoacyl-tRNA synthetase family. Type-1 seryl-tRNA synthetase subfamily. As to quaternary structure, homodimer. The tRNA molecule binds across the dimer.

The protein resides in the cytoplasm. The catalysed reaction is tRNA(Ser) + L-serine + ATP = L-seryl-tRNA(Ser) + AMP + diphosphate + H(+). It catalyses the reaction tRNA(Sec) + L-serine + ATP = L-seryl-tRNA(Sec) + AMP + diphosphate + H(+). Its pathway is aminoacyl-tRNA biosynthesis; selenocysteinyl-tRNA(Sec) biosynthesis; L-seryl-tRNA(Sec) from L-serine and tRNA(Sec): step 1/1. Catalyzes the attachment of serine to tRNA(Ser). Is also able to aminoacylate tRNA(Sec) with serine, to form the misacylated tRNA L-seryl-tRNA(Sec), which will be further converted into selenocysteinyl-tRNA(Sec). This chain is Serine--tRNA ligase, found in Nitratiruptor sp. (strain SB155-2).